The chain runs to 66 residues: ATP synthase F(0) complex subunit 8 (66 aa).

The helical transmembrane segment at 8 to 24 (TWLTMILSMFLTLFIIF) threads the bilayer. Lys54 carries the post-translational modification N6-acetyllysine; alternate. Residue Lys54 is modified to N6-succinyllysine; alternate. Lys57 bears the N6-acetyllysine mark.

This sequence belongs to the ATPase protein 8 family. In terms of assembly, component of the ATP synthase complex composed at least of ATP5F1A/subunit alpha, ATP5F1B/subunit beta, ATP5MC1/subunit c (homooctomer), MT-ATP6/subunit a, MT-ATP8/subunit 8, ATP5ME/subunit e, ATP5MF/subunit f, ATP5MG/subunit g, ATP5MK/subunit k, ATP5MJ/subunit j, ATP5F1C/subunit gamma, ATP5F1D/subunit delta, ATP5F1E/subunit epsilon, ATP5PF/subunit F6, ATP5PB/subunit b, ATP5PD/subunit d, ATP5PO/subunit OSCP. ATP synthase complex consists of a soluble F(1) head domain (subunits alpha(3) and beta(3)) - the catalytic core - and a membrane F(0) domain - the membrane proton channel (subunits c, a, 8, e, f, g, k and j). These two domains are linked by a central stalk (subunits gamma, delta, and epsilon) rotating inside the F1 region and a stationary peripheral stalk (subunits F6, b, d, and OSCP). Interacts with PRICKLE3.

Its subcellular location is the mitochondrion membrane. Its function is as follows. Subunit 8, of the mitochondrial membrane ATP synthase complex (F(1)F(0) ATP synthase or Complex V) that produces ATP from ADP in the presence of a proton gradient across the membrane which is generated by electron transport complexes of the respiratory chain. ATP synthase complex consist of a soluble F(1) head domain - the catalytic core - and a membrane F(1) domain - the membrane proton channel. These two domains are linked by a central stalk rotating inside the F(1) region and a stationary peripheral stalk. During catalysis, ATP synthesis in the catalytic domain of F(1) is coupled via a rotary mechanism of the central stalk subunits to proton translocation. In vivo, can only synthesize ATP although its ATP hydrolase activity can be activated artificially in vitro. Part of the complex F(0) domain. This is ATP synthase F(0) complex subunit 8 from Bos mutus grunniens (Wild yak).